Reading from the N-terminus, the 660-residue chain is Galactocerebrosidase (660 aa).

The first 18 residues, 1-18 (MQTHNFLCIISVILGCSA), serve as a signal peptide directing secretion. Residues threonine 87 and tryptophan 129 each contribute to the substrate site. N-linked (GlcNAc...) asparagine glycosylation occurs at asparagine 147. Asparagine 175 lines the substrate pocket. Residue glutamate 176 is the Proton donor/acceptor of the active site. The active-site Nucleophile is the glutamate 251. A disulfide bridge links cysteine 264 with cysteine 371. Residues asparagine 293 and asparagine 356 are each glycosylated (N-linked (GlcNAc...) asparagine). Residue arginine 373 participates in substrate binding. Residues asparagine 413, asparagine 465, asparagine 495, asparagine 499, asparagine 537, and asparagine 578 are each glycosylated (N-linked (GlcNAc...) asparagine).

This sequence belongs to the glycosyl hydrolase 59 family.

Its subcellular location is the lysosome. It carries out the reaction a beta-D-galactosyl-(1&lt;-&gt;1')-N-acylsphing-4-enine + H2O = an N-acylsphing-4-enine + D-galactose. It catalyses the reaction beta-D-galactosyl-(1&lt;-&gt;1)-sphing-4-enine + H2O = sphing-4-enine + D-galactose. The catalysed reaction is a D-galactosylceramide + H2O = an N-acyl-sphingoid base + D-galactose. Functionally, hydrolyzes the galactose ester bonds of glycolipids such as galactosylceramide and galactosylsphingosine. The polypeptide is Galactocerebrosidase (Danio rerio (Zebrafish)).